A 331-amino-acid polypeptide reads, in one-letter code: Ribose operon repressor (331 aa).

The HTH lacI-type domain occupies 1–56 (MTTIRDVAKHAKVSVATVSRVLNKKGYVSKEAEEAVLQAIKELNYQPSSVARSLYH). A DNA-binding region (H-T-H motif) is located at residues 4-23 (IRDVAKHAKVSVATVSRVLN).

Its function is as follows. Transcriptional repressor for the ribose rbsDACBK operon. This is Ribose operon repressor (rbsR) from Halalkalibacterium halodurans (strain ATCC BAA-125 / DSM 18197 / FERM 7344 / JCM 9153 / C-125) (Bacillus halodurans).